The sequence spans 180 residues: Putative 3-methyladenine DNA glycosylase (180 aa).

This sequence belongs to the DNA glycosylase MPG family.

This Ehrlichia chaffeensis (strain ATCC CRL-10679 / Arkansas) protein is Putative 3-methyladenine DNA glycosylase.